Consider the following 260-residue polypeptide: Putative sgc region transcriptional regulator (260 aa).

The region spanning 5–61 is the HTH deoR-type domain; the sequence is RPDRIKQMLHYLWQHRHLSTQQAMELFGYAEATVRRDFQYIVNQYPGMIRGHGCLDF. The segment at residues 22–41 is a DNA-binding region (H-T-H motif); it reads LSTQQAMELFGYAEATVRRD.

Putative transcriptional regulator for the sgcREAQCX region. This Escherichia coli (strain K12) protein is Putative sgc region transcriptional regulator (sgcR).